Here is a 332-residue protein sequence, read N- to C-terminus: Ribosomal RNA small subunit methyltransferase H (332 aa).

S-adenosyl-L-methionine is bound by residues Gly36 to Tyr38, Asp54, Phe81, Asp102, and Gln109. The tract at residues Pro295–Pro322 is disordered.

It belongs to the methyltransferase superfamily. RsmH family.

It is found in the cytoplasm. It catalyses the reaction cytidine(1402) in 16S rRNA + S-adenosyl-L-methionine = N(4)-methylcytidine(1402) in 16S rRNA + S-adenosyl-L-homocysteine + H(+). In terms of biological role, specifically methylates the N4 position of cytidine in position 1402 (C1402) of 16S rRNA. This chain is Ribosomal RNA small subunit methyltransferase H, found in Rhodopseudomonas palustris (strain ATCC BAA-98 / CGA009).